The following is an 83-amino-acid chain: Translation initiation factor IF-1 (83 aa).

The S1-like domain maps to Met-1–Leu-72.

Belongs to the IF-1 family. Component of the 30S ribosomal translation pre-initiation complex which assembles on the 30S ribosome in the order IF-2 and IF-3, IF-1 and N-formylmethionyl-tRNA(fMet); mRNA recruitment can occur at any time during PIC assembly.

It localises to the cytoplasm. Functionally, one of the essential components for the initiation of protein synthesis. Stabilizes the binding of IF-2 and IF-3 on the 30S subunit to which N-formylmethionyl-tRNA(fMet) subsequently binds. Helps modulate mRNA selection, yielding the 30S pre-initiation complex (PIC). Upon addition of the 50S ribosomal subunit IF-1, IF-2 and IF-3 are released leaving the mature 70S translation initiation complex. This chain is Translation initiation factor IF-1, found in Verminephrobacter eiseniae (strain EF01-2).